The primary structure comprises 395 residues: NAD(P)H-quinone oxidoreductase subunit H, chloroplastic (395 aa).

The protein belongs to the complex I 49 kDa subunit family. As to quaternary structure, NDH is composed of at least 16 different subunits, 5 of which are encoded in the nucleus.

It is found in the plastid. The protein localises to the chloroplast thylakoid membrane. It catalyses the reaction a plastoquinone + NADH + (n+1) H(+)(in) = a plastoquinol + NAD(+) + n H(+)(out). The catalysed reaction is a plastoquinone + NADPH + (n+1) H(+)(in) = a plastoquinol + NADP(+) + n H(+)(out). NDH shuttles electrons from NAD(P)H:plastoquinone, via FMN and iron-sulfur (Fe-S) centers, to quinones in the photosynthetic chain and possibly in a chloroplast respiratory chain. The immediate electron acceptor for the enzyme in this species is believed to be plastoquinone. Couples the redox reaction to proton translocation, and thus conserves the redox energy in a proton gradient. This is NAD(P)H-quinone oxidoreductase subunit H, chloroplastic from Coffea arabica (Arabian coffee).